The primary structure comprises 331 residues: Pantothenate kinase (331 aa).

109-116 (GSVAVGKS) provides a ligand contact to ATP.

The protein belongs to the prokaryotic pantothenate kinase family.

Its subcellular location is the cytoplasm. It carries out the reaction (R)-pantothenate + ATP = (R)-4'-phosphopantothenate + ADP + H(+). Its pathway is cofactor biosynthesis; coenzyme A biosynthesis; CoA from (R)-pantothenate: step 1/5. This chain is Pantothenate kinase, found in Rhizobium rhizogenes (strain K84 / ATCC BAA-868) (Agrobacterium radiobacter).